The sequence spans 240 residues: uncharacterized protein (240 aa).

Basic residues predominate over residues 1–11 (MGMTPRRKRRG). The interval 1–32 (MGMTPRRKRRGGAVQITRPTGRPRTPTTQTTK) is disordered. The segment covering 17-31 (TRPTGRPRTPTTQTT) has biased composition (low complexity). Helical transmembrane passes span 36–56 (WVVG…VELI), 93–113 (LMAN…AGLS), 115–135 (FVWA…LIGN), 146–166 (IGAS…GLFV), 172–192 (IVIG…AMPV), and 198–218 (GVSW…AYLL).

The protein to M.leprae ML1171.

The protein resides in the cell membrane. This is an uncharacterized protein from Mycobacterium tuberculosis (strain CDC 1551 / Oshkosh).